Here is a 1036-residue protein sequence, read N- to C-terminus: Isoleucine--tRNA ligase (1036 aa).

The 'HIGH' region signature appears at 48-58; that stretch reads PTANGKPHVGH. The 'KMSKS' region signature appears at 590-594; that stretch reads KMSKS. ATP is bound at residue Lys-593.

This sequence belongs to the class-I aminoacyl-tRNA synthetase family. IleS type 2 subfamily. Monomer. It depends on Zn(2+) as a cofactor.

It localises to the cytoplasm. It carries out the reaction tRNA(Ile) + L-isoleucine + ATP = L-isoleucyl-tRNA(Ile) + AMP + diphosphate. Functionally, catalyzes the attachment of isoleucine to tRNA(Ile). As IleRS can inadvertently accommodate and process structurally similar amino acids such as valine, to avoid such errors it has two additional distinct tRNA(Ile)-dependent editing activities. One activity is designated as 'pretransfer' editing and involves the hydrolysis of activated Val-AMP. The other activity is designated 'posttransfer' editing and involves deacylation of mischarged Val-tRNA(Ile). In Clostridium tetani (strain Massachusetts / E88), this protein is Isoleucine--tRNA ligase.